Consider the following 166-residue polypeptide: Protein UL5 (166 aa).

It belongs to the RL11 family. In terms of assembly, interacts with host IQGAP1.

The protein localises to the host cytoplasm. Its function is as follows. May play a role in rearrangement of cellular cytoskeleton towards an efficient viral assembly and spreading. The protein is Protein UL5 (UL5) of Human cytomegalovirus (strain AD169) (HHV-5).